The chain runs to 120 residues: MYNKENVFAKIITKNLPAEIIYEDKQILAFKDIAPIAPVHIIVIPKNEYIDYTDFISKASIDEIKHFFSKIADIANEAGLDKVGYRLITNKGEKSGQTIFHFHFHIIGGKKLIGLINNND.

Positions Val-7–Asp-120 constitute an HIT domain. The Histidine triad motif motif lies at His-101 to His-105.

This is an uncharacterized protein from Rickettsia prowazekii (strain Madrid E).